A 283-amino-acid polypeptide reads, in one-letter code: MFRDVLKTLPQYLIPKHGITALAGYFADVKSPRLKNFLIRNFIRKFDVDMSEALIEDPKSYDCFNDFFIRHLKPECRPLSQSDVICPVDGCISEIGKIERGQLLQAKGKYYSVQELLACDGQLAEQFVQGQFATLYLSPKDYHRVHMPIDAELVSMTYIPGALFSVQPATTRVVPKLFARNERLAIFFKTKIGPMVMVMVGATIVGAIGTSWHGDVKRAKKLERFDYSERFPDKIISQGSEMGYFKLGSTVVLLFANGEKIQWDKELLAGSKIQLGKPMAIIT.

Residues aspartate 89, histidine 146, and serine 249 each act as charge relay system; for autoendoproteolytic cleavage activity in the active site. The active-site Schiff-base intermediate with substrate; via pyruvic acid; for decarboxylase activity is serine 249. Serine 249 carries the pyruvic acid (Ser); by autocatalysis modification.

This sequence belongs to the phosphatidylserine decarboxylase family. PSD-B subfamily. Prokaryotic type I sub-subfamily. Heterodimer of a large membrane-associated beta subunit and a small pyruvoyl-containing alpha subunit. Requires pyruvate as cofactor. Post-translationally, is synthesized initially as an inactive proenzyme. Formation of the active enzyme involves a self-maturation process in which the active site pyruvoyl group is generated from an internal serine residue via an autocatalytic post-translational modification. Two non-identical subunits are generated from the proenzyme in this reaction, and the pyruvate is formed at the N-terminus of the alpha chain, which is derived from the carboxyl end of the proenzyme. The autoendoproteolytic cleavage occurs by a canonical serine protease mechanism, in which the side chain hydroxyl group of the serine supplies its oxygen atom to form the C-terminus of the beta chain, while the remainder of the serine residue undergoes an oxidative deamination to produce ammonia and the pyruvoyl prosthetic group on the alpha chain. During this reaction, the Ser that is part of the protease active site of the proenzyme becomes the pyruvoyl prosthetic group, which constitutes an essential element of the active site of the mature decarboxylase.

The protein localises to the cell membrane. It carries out the reaction a 1,2-diacyl-sn-glycero-3-phospho-L-serine + H(+) = a 1,2-diacyl-sn-glycero-3-phosphoethanolamine + CO2. The protein operates within phospholipid metabolism; phosphatidylethanolamine biosynthesis; phosphatidylethanolamine from CDP-diacylglycerol: step 2/2. Its function is as follows. Catalyzes the formation of phosphatidylethanolamine (PtdEtn) from phosphatidylserine (PtdSer). The polypeptide is Phosphatidylserine decarboxylase proenzyme (Legionella pneumophila (strain Corby)).